Reading from the N-terminus, the 192-residue chain is Ion-translocating oxidoreductase complex subunit B (192 aa).

The hydrophobic stretch occupies residues 1–26 (MNTIWIAVAAISLLGLAFGAILGYAS). The 60-residue stretch at 32-91 (EDDPVVEKIDEILPQSQCGQCGYPGCRPYAEAISCNGEKINRCAPGGEAVMLKISELLNV) folds into the 4Fe-4S domain. [4Fe-4S] cluster-binding residues include C49, C52, C57, C74, C117, C120, C123, C127, C147, C150, C153, and C157. 4Fe-4S ferredoxin-type domains are found at residues 108–137 (VVAV…GATR) and 138–167 (AMHT…LQPV).

It belongs to the 4Fe4S bacterial-type ferredoxin family. RnfB subfamily. As to quaternary structure, the complex is composed of six subunits: RsxA, RsxB, RsxC, RsxD, RsxE and RsxG. [4Fe-4S] cluster is required as a cofactor.

It is found in the cell inner membrane. In terms of biological role, part of a membrane-bound complex that couples electron transfer with translocation of ions across the membrane. Required to maintain the reduced state of SoxR. The chain is Ion-translocating oxidoreductase complex subunit B from Escherichia fergusonii (strain ATCC 35469 / DSM 13698 / CCUG 18766 / IAM 14443 / JCM 21226 / LMG 7866 / NBRC 102419 / NCTC 12128 / CDC 0568-73).